A 73-amino-acid chain; its full sequence is UPF0346 protein LVIS_0790 (73 aa).

The protein belongs to the UPF0346 family.

In Levilactobacillus brevis (strain ATCC 367 / BCRC 12310 / CIP 105137 / JCM 1170 / LMG 11437 / NCIMB 947 / NCTC 947) (Lactobacillus brevis), this protein is UPF0346 protein LVIS_0790.